Consider the following 244-residue polypeptide: Protein YIPF4 (244 aa).

Over 1–113 (MQPPGPPPAY…FNRQVVRDNP (113 aa)) the chain is Cytoplasmic. Residues 114 to 134 (DFWGPLAVVLFFSMISLYGQF) form a helical membrane-spanning segment. Residues 135-138 (RVVS) are Extracellular-facing. A helical membrane pass occupies residues 139–159 (WIITIWIFGSLTIFLLARVLG). The Cytoplasmic segment spans residues 160 to 166 (GEVAYGQ). The helical transmembrane segment at 167–187 (VLGVIGYSLLPLIVIAPVLLV) threads the bilayer. Over 188-195 (VGSFEVVS) the chain is Extracellular. A helical membrane pass occupies residues 196 to 216 (TLIKLFGVFWAAYSAASLLVG). Residues 217 to 223 (EEFKTKK) lie on the Cytoplasmic side of the membrane. Residues 224-244 (PLLIYPIFLLYIYFLSLYTGV) traverse the membrane as a helical segment.

This sequence belongs to the YIP1 family. Interacts with YIPF3 and YIPF5. In terms of assembly, (Microbial infection) Interacts with human papillomavirus (HPV) E5 proteins. Expressed in keratinocytes (at protein level).

The protein resides in the golgi apparatus. Its subcellular location is the cis-Golgi network membrane. Involved in the maintenance of the Golgi structure. The polypeptide is Protein YIPF4 (YIPF4) (Homo sapiens (Human)).